The following is a 407-amino-acid chain: Dephospho-CoA kinase (407 aa).

Positions 3–204 (RIGLTGGIGA…QPFAHNLAQR (202 aa)) constitute a DPCK domain. 11 to 16 (GAGKSL) lines the ATP pocket. The segment at 196-407 (PFAHNLAQRQ…EWADAVHWRP (212 aa)) is UPF0157.

The protein in the N-terminal section; belongs to the CoaE family. In the C-terminal section; belongs to the UPF0157 (GrpB) family.

The protein localises to the cytoplasm. The enzyme catalyses 3'-dephospho-CoA + ATP = ADP + CoA + H(+). Its pathway is cofactor biosynthesis; coenzyme A biosynthesis; CoA from (R)-pantothenate: step 5/5. In terms of biological role, catalyzes the phosphorylation of the 3'-hydroxyl group of dephosphocoenzyme A to form coenzyme A. The sequence is that of Dephospho-CoA kinase from Mycobacterium bovis (strain ATCC BAA-935 / AF2122/97).